The chain runs to 379 residues: tRNA-specific 2-thiouridylase MnmA (379 aa).

ATP contacts are provided by residues 23-30 (AMSGGVDS) and Leu-49. Cys-117 serves as the catalytic Nucleophile. Cys-117 and Cys-214 are joined by a disulfide. Gly-141 serves as a coordination point for ATP. Residues 163–165 (RDQ) are interaction with tRNA. Residue Cys-214 is the Cysteine persulfide intermediate of the active site.

This sequence belongs to the MnmA/TRMU family.

It is found in the cytoplasm. It carries out the reaction S-sulfanyl-L-cysteinyl-[protein] + uridine(34) in tRNA + AH2 + ATP = 2-thiouridine(34) in tRNA + L-cysteinyl-[protein] + A + AMP + diphosphate + H(+). Functionally, catalyzes the 2-thiolation of uridine at the wobble position (U34) of tRNA, leading to the formation of s(2)U34. The sequence is that of tRNA-specific 2-thiouridylase MnmA from Cereibacter sphaeroides (strain KD131 / KCTC 12085) (Rhodobacter sphaeroides).